The following is a 336-amino-acid chain: Ribose-phosphate pyrophosphokinase 1 (336 aa).

Mg(2+) is bound by residues aspartate 150, histidine 152, aspartate 161, and aspartate 165. The interval 236 to 251 (GKVAVMVDDMIDTAGT) is binding of phosphoribosylpyrophosphate.

Belongs to the ribose-phosphate pyrophosphokinase family.

It carries out the reaction D-ribose 5-phosphate + ATP = 5-phospho-alpha-D-ribose 1-diphosphate + AMP + H(+). This Spinacia oleracea (Spinach) protein is Ribose-phosphate pyrophosphokinase 1 (PRS1).